The primary structure comprises 432 residues: Glutamyl-tRNA reductase (432 aa).

Residues 49 to 52 (TCNR), Ser-109, 114 to 116 (EGQ), and Gln-120 contribute to the substrate site. Cys-50 functions as the Nucleophile in the catalytic mechanism. 189–194 (GAGKMS) is a binding site for NADP(+).

Belongs to the glutamyl-tRNA reductase family. As to quaternary structure, homodimer.

It carries out the reaction (S)-4-amino-5-oxopentanoate + tRNA(Glu) + NADP(+) = L-glutamyl-tRNA(Glu) + NADPH + H(+). The protein operates within porphyrin-containing compound metabolism; protoporphyrin-IX biosynthesis; 5-aminolevulinate from L-glutamyl-tRNA(Glu): step 1/2. It functions in the pathway porphyrin-containing compound metabolism; chlorophyll biosynthesis. In terms of biological role, catalyzes the NADPH-dependent reduction of glutamyl-tRNA(Glu) to glutamate 1-semialdehyde (GSA). The polypeptide is Glutamyl-tRNA reductase (Cyanothece sp. (strain PCC 7425 / ATCC 29141)).